The chain runs to 104 residues: NADH-ubiquinone oxidoreductase 12 kDa subunit, mitochondrial (104 aa).

Belongs to the complex I NDUFS6 subunit family. In terms of assembly, complex I is composed of about 40 different subunits.

It localises to the mitochondrion inner membrane. Functionally, accessory subunit of the mitochondrial membrane respiratory chain NADH dehydrogenase (Complex I), that is believed not to be involved in catalysis. Complex I functions in the transfer of electrons from NADH to the respiratory chain. The immediate electron acceptor for the enzyme is believed to be ubiquinone. The protein is NADH-ubiquinone oxidoreductase 12 kDa subunit, mitochondrial (nuo-12.3) of Neurospora crassa (strain ATCC 24698 / 74-OR23-1A / CBS 708.71 / DSM 1257 / FGSC 987).